Reading from the N-terminus, the 88-residue chain is MASKEFHIVVETGIHARPATLLVHTASKFTSEITLEYKGKSVNLKSIMGVMSLGVGQGADVTISAEGADADDAISTIAETMTKEGLAE.

One can recognise an HPr domain in the interval 1-88; sequence MASKEFHIVV…ETMTKEGLAE (88 aa). His15 serves as the catalytic Pros-phosphohistidine intermediate. Ser46 carries the post-translational modification Phosphoserine; by HPrK/P.

It belongs to the HPr family.

Its subcellular location is the cytoplasm. Its activity is regulated as follows. Phosphorylation on Ser-46 inhibits the phosphoryl transfer from enzyme I to HPr. Functionally, general (non sugar-specific) component of the phosphoenolpyruvate-dependent sugar phosphotransferase system (sugar PTS). This major carbohydrate active-transport system catalyzes the phosphorylation of incoming sugar substrates concomitantly with their translocation across the cell membrane. The phosphoryl group from phosphoenolpyruvate (PEP) is transferred to the phosphoryl carrier protein HPr by enzyme I. Phospho-HPr then transfers it to the PTS EIIA domain. In terms of biological role, P-Ser-HPr interacts with the catabolite control protein A (CcpA), forming a complex that binds to DNA at the catabolite response elements cre, operator sites preceding a large number of catabolite-regulated genes. Thus, P-Ser-HPr is a corepressor in carbon catabolite repression (CCR), a mechanism that allows bacteria to coordinate and optimize the utilization of available carbon sources. P-Ser-HPr also plays a role in inducer exclusion, in which it probably interacts with several non-PTS permeases and inhibits their transport activity. The polypeptide is Phosphocarrier protein HPr (ptsH) (Lactococcus lactis subsp. lactis (strain IL1403) (Streptococcus lactis)).